Here is a 132-residue protein sequence, read N- to C-terminus: NADH-quinone oxidoreductase subunit A (132 aa).

The next 3 membrane-spanning stretches (helical) occupy residues Tyr-7–Val-27, Phe-62–Trp-82, and Trp-91–Leu-111.

It belongs to the complex I subunit 3 family. NDH-1 is composed of 14 different subunits. Subunits NuoA, H, J, K, L, M, N constitute the membrane sector of the complex.

The protein resides in the cell inner membrane. The enzyme catalyses a quinone + NADH + 5 H(+)(in) = a quinol + NAD(+) + 4 H(+)(out). Functionally, NDH-1 shuttles electrons from NADH, via FMN and iron-sulfur (Fe-S) centers, to quinones in the respiratory chain. The immediate electron acceptor for the enzyme in this species is believed to be ubiquinone. Couples the redox reaction to proton translocation (for every two electrons transferred, four hydrogen ions are translocated across the cytoplasmic membrane), and thus conserves the redox energy in a proton gradient. The chain is NADH-quinone oxidoreductase subunit A from Acidiphilium cryptum (strain JF-5).